A 266-amino-acid polypeptide reads, in one-letter code: Undecaprenyl-diphosphatase (266 aa).

The next 8 helical transmembrane spans lie at 1–21, 43–63, 81–101, 107–127, 145–165, 183–203, 219–239, and 245–265; these read MMSW…TEFL, ASVF…VIYW, LYGI…GFLF, TLFT…FMLI, LTPK…WPGF, HLAA…ATGY, LFIT…KVFI, and ISLR…YLCI.

This sequence belongs to the UppP family.

It localises to the cell membrane. It carries out the reaction di-trans,octa-cis-undecaprenyl diphosphate + H2O = di-trans,octa-cis-undecaprenyl phosphate + phosphate + H(+). Functionally, catalyzes the dephosphorylation of undecaprenyl diphosphate (UPP). Confers resistance to bacitracin. The sequence is that of Undecaprenyl-diphosphatase from Lawsonia intracellularis (strain PHE/MN1-00).